A 162-amino-acid polypeptide reads, in one-letter code: Small ribosomal subunit protein uS9 (162 aa).

The protein belongs to the universal ribosomal protein uS9 family.

The chain is Small ribosomal subunit protein uS9 from Methylobacterium nodulans (strain LMG 21967 / CNCM I-2342 / ORS 2060).